Reading from the N-terminus, the 1463-residue chain is Regulating synaptic membrane exocytosis protein 1 (1463 aa).

The interval 1 to 26 is disordered; that stretch reads MSSAVGPRGPRPPTVPPPMQELPDLS. The span at 9 to 20 shows a compositional bias: pro residues; sequence GPRPPTVPPPMQ. Positions 22-205 constitute a RabBD domain; sequence LPDLSHLTEE…TKSGAWFFGS (184 aa). The FYVE-type zinc finger occupies 133–193; that stretch reads KDDAPTCGIC…VCNLCRKQQE (61 aa). Zn(2+) contacts are provided by Cys-139, Cys-142, Cys-155, Cys-158, Cys-163, Cys-166, Cys-185, and Cys-188. A disordered region spans residues 205 to 393; the sequence is SGPQQPSQDG…DVELESESVS (189 aa). Residues 206 to 222 show a composition bias toward polar residues; that stretch reads GPQQPSQDGTLSDTATG. Over residues 227-240 the composition is skewed to basic and acidic residues; it reads VPREKKARLQERSR. Polar residues predominate over residues 241–256; it reads SQTPLSTAAVSSQDTA. Over residues 327–372 the composition is skewed to basic and acidic residues; it reads ADERERKERRETRRLEKGRSQDYPDRLEKREDGRVAEDEKQRKEEE. The segment covering 381 to 391 has biased composition (acidic residues); it reads SCEDVELESES. Ser-413 is subject to Phosphoserine. The PDZ domain maps to 440-526; sequence RTTMPKESGA…EPQVEIIVSR (87 aa). Residues 533 to 567 form a disordered region; the sequence is RIPESSHPPLESSSSSFESQKMERPSISVISPTSP. The span at 535–551 shows a compositional bias: low complexity; sequence PESSHPPLESSSSSFES. Residues Ser-563 and Ser-566 each carry the phosphoserine modification. Positions 577–700 constitute a C2 1 domain; that stretch reads LPGQLSVKLW…ALLDDEPHWY (124 aa). The tract at residues 705-856 is disordered; sequence HDESSLPLPQ…YSSEPDSELL (152 aa). Ser-716 bears the Phosphoserine mark. The span at 770–779 shows a compositional bias: polar residues; it reads ATTLTVPEQQ. Residue Ser-812 is modified to Phosphoserine. A compositionally biased stretch (basic and acidic residues) spans 827–844; that stretch reads RHHDASRSLADHRSRHAE. Phosphoserine is present on Ser-866. The tract at residues 874–1049 is disordered; the sequence is SELQPSLDRA…RQLPQVPVRS (176 aa). Over residues 928–941 the composition is skewed to basic and acidic residues; the sequence is PENDRHSRKSERSS. Residues 1021-1035 show a composition bias toward polar residues; the sequence is QGSPTQSPPADTSFG. The residue at position 1023 (Ser-1023) is a Phosphoserine. A Phosphothreonine modification is found at Thr-1025. Residues Ser-1027, Ser-1079, Ser-1081, Ser-1082, Ser-1110, Ser-1111, and Ser-1113 each carry the phosphoserine modification. The tract at residues 1104–1161 is disordered; it reads DNASAKSSDSDVSDVSAISRASSTSRLSSTSFMSEQSERPRGRISSFTPKMQGRRMGT. The segment covering 1116–1137 has biased composition (low complexity); sequence SDVSAISRASSTSRLSSTSFMS. Residue Ser-1187 is modified to Phosphoserine. Positions 1216-1266 are disordered; that stretch reads RSRSTSQLSQTESGHKKLKSTIQRSTETGMAAEMRKMVRQPSRESTDGSIN. Residues 1248–1261 are compositionally biased toward basic and acidic residues; that stretch reads EMRKMVRQPSREST. The region spanning 1309-1427 is the C2 2 domain; it reads AMGDIQIGME…DLSSMVIGWY (119 aa). 4 positions are modified to phosphoserine: Ser-1448, Ser-1451, Ser-1454, and Ser-1463.

In terms of assembly, binds SNAP25, SYT1 and CACNA1B. Interaction with SYT1 is enhanced by calcium ions. Interaction with SNAP25 is weaker in the presence of calcium ions. Interacts with TSPOAP1 and RIMBP2; interacts with PPFIA3 and PPFIA4. Interacts with ERC1. Interacts with RAB3A, RAB3B and RAB3D that have been activated by GTP-binding. Interacts with RAB3C, RAB10, RAB26 and RAB37. Binds UNC13A. Post-translationally, phosphorylated by BRSK1.

Its subcellular location is the cell membrane. It localises to the synapse. It is found in the presynaptic cell membrane. Its function is as follows. Rab effector involved in exocytosis. May act as scaffold protein that regulates neurotransmitter release at the active zone. Essential for maintaining normal probability of neurotransmitter release and for regulating release during short-term synaptic plasticity. Plays a role in dendrite formation by melanocytes. The protein is Regulating synaptic membrane exocytosis protein 1 (Rims1) of Mus musculus (Mouse).